The sequence spans 309 residues: NAD kinase (309 aa).

Asp-89 (proton acceptor) is an active-site residue. NAD(+) contacts are provided by residues 89–90 (DG), 163–164 (NE), Arg-191, Asp-193, and 204–209 (TAYSLS).

The protein belongs to the NAD kinase family. The cofactor is a divalent metal cation.

The protein localises to the cytoplasm. The catalysed reaction is NAD(+) + ATP = ADP + NADP(+) + H(+). Involved in the regulation of the intracellular balance of NAD and NADP, and is a key enzyme in the biosynthesis of NADP. Catalyzes specifically the phosphorylation on 2'-hydroxyl of the adenosine moiety of NAD to yield NADP. This is NAD kinase from Shewanella halifaxensis (strain HAW-EB4).